Reading from the N-terminus, the 295-residue chain is Small ribosomal subunit protein uS2 (295 aa).

Serine 2 carries the N-acetylserine modification. Position 43 is a phosphoserine (serine 43). Residue lysine 52 is modified to N6-acetyllysine. The segment at 54–113 (TWEKLLLAARAIVAIENPADVSVISSRNTGQRAVLKFAAATGATPIAGRFTPGTFTNQIQ) is interaction with PPP1R16B. The residue at position 89 (lysine 89) is an N6-acetyllysine; alternate. Lysine 89 is covalently cross-linked (Glycyl lysine isopeptide (Lys-Gly) (interchain with G-Cter in SUMO2); alternate). A Phosphothreonine modification is found at threonine 97. 2 laminin-binding regions span residues 161–180 (IPCN…MLAR) and 205–229 (RDPE…EFQG). [DE]-W-[ST] repeat units follow at residues 230 to 232 (EWT), 247 to 249 (DWS), 266 to 268 (DWS), 275 to 277 (DWS), and 293 to 295 (EWS). The laminin-binding stretch occupies residues 242 to 295 (QPEVADWSEGVQVPSVPIQQFPTEDWSAQPTTEDWSAAPTAQATEWVGTTTEWS). Positions 266–295 (DWSAQPTTEDWSAAPTAQATEWVGTTTEWS) are disordered.

Belongs to the universal ribosomal protein uS2 family. In terms of assembly, monomer (37LRP) and homodimer (67LR). Component of the small ribosomal subunit. Mature ribosomes consist of a small (40S) and a large (60S) subunit. The 40S subunit contains about 33 different proteins and 1 molecule of RNA (18S). The 60S subunit contains about 49 different proteins and 3 molecules of RNA (28S, 5.8S and 5S). Interacts with RPS21. Interacts with several laminins including at least LAMB1. Interacts with MDK. The mature dimeric form interacts with PPP1R16B (via its fourth ankyrin repeat). Interacts with PPP1CA only in the presence of PPP1R16B. In terms of processing, acylated. Acylation may be a prerequisite for conversion of the monomeric 37 kDa laminin receptor precursor (37LRP) to the mature dimeric 67 kDa laminin receptor (67LR), and may provide a mechanism for membrane association. Cleaved by stromelysin-3 (ST3) at the cell surface. Cleavage by stromelysin-3 may be a mechanism to alter cell-extracellular matrix interactions.

Its subcellular location is the cell membrane. It is found in the cytoplasm. It localises to the nucleus. In terms of biological role, required for the assembly and/or stability of the 40S ribosomal subunit. Required for the processing of the 20S rRNA-precursor to mature 18S rRNA in a late step of the maturation of 40S ribosomal subunits. Also functions as a cell surface receptor for laminin. Plays a role in cell adhesion to the basement membrane and in the consequent activation of signaling transduction pathways. May play a role in cell fate determination and tissue morphogenesis. Also acts as a receptor for several other ligands, including the pathogenic prion protein, viruses, and bacteria. Acts as a PPP1R16B-dependent substrate of PPP1CA. The protein is Small ribosomal subunit protein uS2 of Sus scrofa (Pig).